A 779-amino-acid chain; its full sequence is Lon protease (779 aa).

The region spanning 10 to 203 (LPLLPLRGLL…ILLTILNNER (194 aa)) is the Lon N-terminal domain. Residue 355–362 (GPPGVGKT) participates in ATP binding. One can recognise a Lon proteolytic domain in the interval 591–772 (KDQVGSVTGL…DEVLRHALTK (182 aa)). Active-site residues include Ser678 and Lys721.

The protein belongs to the peptidase S16 family. As to quaternary structure, homohexamer. Organized in a ring with a central cavity.

The protein resides in the cytoplasm. It catalyses the reaction Hydrolysis of proteins in presence of ATP.. ATP-dependent serine protease that mediates the selective degradation of mutant and abnormal proteins as well as certain short-lived regulatory proteins. Required for cellular homeostasis and for survival from DNA damage and developmental changes induced by stress. Degrades polypeptides processively to yield small peptide fragments that are 5 to 10 amino acids long. Binds to DNA in a double-stranded, site-specific manner. The sequence is that of Lon protease from Brevibacillus choshinensis.